A 245-amino-acid polypeptide reads, in one-letter code: Type III pantothenate kinase (245 aa).

6–13 (DQGNTILK) is a binding site for ATP. Residues Tyr86 and 93–96 (GTDR) each bind substrate. Asp95 acts as the Proton acceptor in catalysis. Asp116 provides a ligand contact to K(+). Residue Thr119 coordinates ATP. Residue Thr171 coordinates substrate.

It belongs to the type III pantothenate kinase family. As to quaternary structure, homodimer. Requires NH4(+) as cofactor. K(+) is required as a cofactor.

It is found in the cytoplasm. The enzyme catalyses (R)-pantothenate + ATP = (R)-4'-phosphopantothenate + ADP + H(+). It functions in the pathway cofactor biosynthesis; coenzyme A biosynthesis; CoA from (R)-pantothenate: step 1/5. Its function is as follows. Catalyzes the phosphorylation of pantothenate (Pan), the first step in CoA biosynthesis. The protein is Type III pantothenate kinase of Azobacteroides pseudotrichonymphae genomovar. CFP2.